The following is a 2364-amino-acid chain: Cytotoxin-L (2364 aa).

The tract at residues 1-91 (MNLVNKAQLQ…EVLELKNNSL (91 aa)) is four-helical bundle. The GT44 domain occupies 96–468 (KNLHFIWIGG…APDVRSTINL (373 aa)). Residues 96-468 (KNLHFIWIGG…APDVRSTINL (373 aa)) form a glucosyltransferase region region. Residues 101 to 103 (IWI), N139, 265 to 270 (LAAASD), and 286 to 288 (DVD) contribute to the UDP-alpha-D-glucose site. Positions 288, 515, and 518 each coordinate Mg(2+). A UDP-alpha-D-glucose-binding site is contributed by 518 to 520 (SLW). The segment at 544–799 (GEDDNLDFAQ…KSKYLHELST (256 aa)) is autoprocessing region. Zn(2+) contacts are provided by E545 and D546. The 208-residue stretch at 567 to 774 (LSSMKTRNKE…EESIIKDISS (208 aa)) folds into the Peptidase C80 domain. 1D-myo-inositol hexakisphosphate is bound by residues Y577, K600, and K647. Residue H653 participates in Zn(2+) binding. Residue H653 is the For protease activity of the active site. C698 acts as the Nucleophile; for protease activity in catalysis. H757 is a binding site for Zn(2+). 1D-myo-inositol hexakisphosphate contacts are provided by K764, K775, and K792. The translocation region stretch occupies residues 800–1500 (LLQEIRNNAN…ESIIRNIYMP (701 aa)). Interaction with host SEMA6A and SEMA6B regions lie at residues 1433–1438 (CMKLIE), 1466–1471 (DNETKY), 1484–1495 (FTAEFSNESIIR), 1504–1511 (NLFIYSSK), and 1596–1601 (YNNLDP). Cell wall-binding repeat units follow at residues 1813-1832 (EFGLVSLDNDYFYINSFGNM), 1833-1852 (VSGLIYINDSLYYFKPPKNN), 1854-1873 (ITGFTTIDGNKYYFDPTKSG), 1876-1895 (SIGEITIDGKDYYFNKQGIL), 1926-1945 (FIGKLNIDGKIYYFEDNYRA), 1946-1965 (AVEWKLLDDETYYFNPKTGE), 1967-1986 (LKGLHQIGDNKYYFDDNGIM), 1987-2006 (QTGFITINDKVFYFNNDGVM), 2007-2026 (QVGYIEVNGKYFYFGKNGER), 2057-2076 (YNGILNFNGKIYFFDISNTA), 2077-2097 (VVGWGTLDDGSTYYFDDNRAE), 2099-2118 (CIGLTVINDCKYYFDDNGIR), 2119-2138 (QLGFITINDNIFYFSESGKI), 2139-2158 (ELGYQNINGNYFYIDESGLV), 2209-2224 (ETGWIENETDKYYFDP), 2227-2249 (KKAYKGINVVDDIKYYFDENGIM), 2250-2269 (RTGLISFENNNYYFNEDGKM), 2270-2289 (QFGYLNIKDKMFYFGKDGKM), 2320-2339 (YTGWLDLDGKRYYFTDEYIA), and 2340-2359 (ATGSLTIDGYNYYFDPDTAE). Positions 1835–2364 (GLIYINDSLY…PDTAELVVSE (530 aa)) are receptor-binding (CROPS) region.

This sequence belongs to the clostridial glucosylating toxin (LCGT) family. As to quaternary structure, homomultimer; forms an inactive homomultimer at pH 8, which dissociates at pH 4, leading to cytotoxicity. Interacts with host SEMA6A; interaction promotes toxin entry into host cell. Interacts with host SEMA6B; interaction promotes toxin entry into host cell. Requires Zn(2+) as cofactor. Mn(2+) serves as cofactor. Mg(2+) is required as a cofactor. Undergoes autocatalytic cleavage to release the N-terminal part (Glucosyltransferase TcsL), which constitutes the active part of the toxin, in the host cytosol. 1D-myo-inositol hexakisphosphate-binding (InsP6) activates the peptidase C80 domain and promotes autoprocessing.

It localises to the secreted. Its subcellular location is the host endosome membrane. It is found in the host cytoplasm. The protein localises to the host cytosol. The protein resides in the host cell membrane. It carries out the reaction L-threonyl-[protein] + UDP-alpha-D-glucose = 3-O-(alpha-D-glucosyl)-L-threonyl-[protein] + UDP + H(+). Its activity is regulated as follows. Protease activity is activated upon binding to 1D-myo-inositol hexakisphosphate (InsP6), which induces conformational reorganization. Its function is as follows. Precursor of a cytotoxin that targets the vascular endothelium, inducing an anti-inflammatory effect and resulting in lethal toxic shock syndrome. TcsL constitutes the main toxin that mediates the pathology of P.sordellii infection, an anaerobic Gram-positive bacterium found in soil and in the gastrointestinal and vaginal tracts of animals and humans; although the majority of carriers are asymptomatic, pathogenic P.sordellii infections arise rapidly and are highly lethal. This form constitutes the precursor of the toxin: it enters into host cells and mediates autoprocessing to release the active toxin (Glucosyltransferase TcsL) into the host cytosol. Targets vascular endothelium by binding to the semaphorin proteins SEMA6A and SEMA6B, and enters host cells via clathrin-mediated endocytosis. Once entered into host cells, acidification in the endosome promotes the membrane insertion of the translocation region and formation of a pore, leading to translocation of the GT44 and peptidase C80 domains across the endosomal membrane. This activates the peptidase C80 domain and autocatalytic processing, releasing the N-terminal part (Glucosyltransferase TcsL), which constitutes the active part of the toxin, in the cytosol. Functionally, active form of the toxin, which is released into the host cytosol following autoprocessing and inactivates small GTPases. Acts by mediating monoglucosylation of small GTPases of the Ras (H-Ras/HRAS, K-Ras/KRAS, N-Ras/NRAS and Ral/RALA) family in host cells at the conserved threonine residue located in the switch I region ('Thr-37/35'), using UDP-alpha-D-glucose as the sugar donor. Also able to catalyze monoglucosylation of some members of the Rho family (Rac1 and Rap2A), but with less efficiency than with Ras proteins. Monoglucosylation of host small GTPases completely prevents the recognition of the downstream effector, blocking the GTPases in their inactive form and leading to apoptosis. Induces an anti-inflammatory effect, mainly by inactivating Ras proteins which results in blockage of the cell cycle and killing of immune cells. The absence or moderate local inflammatory response allows C.sordellii spreading in deep tissues, production of toxin which is released in the general circulation and causes a toxic shock syndrome. The sequence is that of Cytotoxin-L from Paraclostridium sordellii (Clostridium sordellii).